We begin with the raw amino-acid sequence, 60 residues long: Large ribosomal subunit protein uL30 (60 aa).

Belongs to the universal ribosomal protein uL30 family. As to quaternary structure, part of the 50S ribosomal subunit.

The sequence is that of Large ribosomal subunit protein uL30 from Desulforapulum autotrophicum (strain ATCC 43914 / DSM 3382 / VKM B-1955 / HRM2) (Desulfobacterium autotrophicum).